Here is a 501-residue protein sequence, read N- to C-terminus: Glycerol kinase (501 aa).

An ADP-binding site is contributed by threonine 17. ATP contacts are provided by threonine 17, threonine 18, and serine 19. Threonine 17 lines the sn-glycerol 3-phosphate pocket. Residue arginine 21 coordinates ADP. Sn-glycerol 3-phosphate contacts are provided by arginine 87, glutamate 88, tyrosine 139, and aspartate 243. Glycerol contacts are provided by arginine 87, glutamate 88, tyrosine 139, aspartate 243, and glutamine 244. ADP contacts are provided by threonine 265 and glycine 308. ATP contacts are provided by threonine 265, glycine 308, glutamine 312, and glycine 409. ADP-binding residues include glycine 409 and asparagine 413.

Belongs to the FGGY kinase family.

The catalysed reaction is glycerol + ATP = sn-glycerol 3-phosphate + ADP + H(+). It functions in the pathway polyol metabolism; glycerol degradation via glycerol kinase pathway; sn-glycerol 3-phosphate from glycerol: step 1/1. With respect to regulation, inhibited by fructose 1,6-bisphosphate (FBP). Its function is as follows. Key enzyme in the regulation of glycerol uptake and metabolism. Catalyzes the phosphorylation of glycerol to yield sn-glycerol 3-phosphate. The sequence is that of Glycerol kinase from Pseudomonas fluorescens (strain ATCC BAA-477 / NRRL B-23932 / Pf-5).